Reading from the N-terminus, the 164-residue chain is Thiol peroxidase (164 aa).

The region spanning 18-164 is the Thioredoxin domain; sequence KKVGDSAPDF…YEAVLSHLNK (147 aa). Cysteine 60 serves as the catalytic Cysteine sulfenic acid (-SOH) intermediate. Cysteine 60 and cysteine 94 are joined by a disulfide.

It belongs to the peroxiredoxin family. Tpx subfamily. Homodimer.

It carries out the reaction a hydroperoxide + [thioredoxin]-dithiol = an alcohol + [thioredoxin]-disulfide + H2O. Thiol-specific peroxidase that catalyzes the reduction of hydrogen peroxide and organic hydroperoxides to water and alcohols, respectively. Plays a role in cell protection against oxidative stress by detoxifying peroxides. The chain is Thiol peroxidase from Oceanobacillus iheyensis (strain DSM 14371 / CIP 107618 / JCM 11309 / KCTC 3954 / HTE831).